The sequence spans 381 residues: L-lactate dehydrogenase (381 aa).

Residues 1–380 (MIISSTNDYR…TRDALVDLSK (380 aa)) form the FMN hydroxy acid dehydrogenase domain. Tyr-24 provides a ligand contact to substrate. Ser-106 and Gln-127 together coordinate FMN. Substrate is bound at residue Tyr-129. Thr-155 serves as a coordination point for FMN. Substrate is bound at residue Arg-164. Position 251 (Lys-251) interacts with FMN. The Proton acceptor role is filled by His-275. Residue Arg-278 coordinates substrate. 306 to 330 (DSGIRNGLDIVRMLALGADATMLGR) is an FMN binding site.

Belongs to the FMN-dependent alpha-hydroxy acid dehydrogenase family. FMN is required as a cofactor.

It is found in the cell inner membrane. The enzyme catalyses (S)-lactate + A = pyruvate + AH2. Functionally, catalyzes the conversion of L-lactate to pyruvate. Is coupled to the respiratory chain. This is L-lactate dehydrogenase from Actinobacillus pleuropneumoniae serotype 3 (strain JL03).